A 240-amino-acid polypeptide reads, in one-letter code: Adenosine 5'-phosphosulfate reductase (240 aa).

[4Fe-4S] cluster contacts are provided by cysteine 125, cysteine 126, cysteine 208, and cysteine 211. Catalysis depends on cysteine 234, which acts as the Nucleophile; cysteine thiosulfonate intermediate.

The protein belongs to the PAPS reductase family. CysH subfamily. Requires [4Fe-4S] cluster as cofactor.

It is found in the cytoplasm. It carries out the reaction [thioredoxin]-disulfide + sulfite + AMP + 2 H(+) = adenosine 5'-phosphosulfate + [thioredoxin]-dithiol. Its pathway is sulfur metabolism; hydrogen sulfide biosynthesis; sulfite from sulfate. In terms of biological role, catalyzes the formation of sulfite from adenosine 5'-phosphosulfate (APS) using thioredoxin as an electron donor. The chain is Adenosine 5'-phosphosulfate reductase from Oceanobacillus iheyensis (strain DSM 14371 / CIP 107618 / JCM 11309 / KCTC 3954 / HTE831).